Consider the following 569-residue polypeptide: F-box/WD repeat-containing protein 5 (569 aa).

In terms of domain architecture, F-box spans 3-49 (EGGMPLLPDSLVYQIFLSLGPADVLAAGLVCRQWQAVSRDEFLWREQ). The stretch at 90 to 129 (EHTDQVLHLSFSHSGYQFASCSKDCTVKIWNNDLTISLLH) is one WD 1 repeat. Residue S151 is modified to Phosphoserine; by PLK4. The D-box signature appears at 308–316 (RRVFDSVLD). WD repeat units follow at residues 470-509 (TPND…CLAK) and 511-551 (RHED…RVLQ).

The protein belongs to the FBXW5 family. In terms of assembly, part of the SCF (SKP1-CUL1-F-box) E3 ubiquitin-protein ligase complex SCF(FBXW5) composed of CUL1, SKP1, RBX1 and FBXW5. Component of the DCX(FBXW5) E3 ubiquitin ligase complex, at least composed of (CUL4A or CUL4B), DDB1, FBXW5 and RBX1. Interacts with CDC20, EPS8, TSC1, TSC2 and SASS6. Interacts with TNFAIP8L1; TNFAIP8L1 competes with TSC2 to bind FBXW5 increasing TSC2 stability by preventing its ubiquitination. Post-translationally, phosphorylated at Ser-151 by PLK4 during the G1/S transition, leading to inhibit its ability to ubiquitinate SASS6. Ubiquitinated and degraded by the APC/C complex during mitosis and G1 phase.

It localises to the cytoplasm. The protein operates within protein modification; protein ubiquitination. In terms of biological role, substrate recognition component of both SCF (SKP1-CUL1-F-box protein) and DCX (DDB1-CUL4-X-box) E3 ubiquitin-protein ligase complexes. Substrate recognition component of the SCF(FBXW5) E3 ubiquitin-protein ligase complex which mediates the ubiquitination and subsequent proteasomal degradation of SASS6 during S phase, leading to prevent centriole reduplication. The SCF(FBXW5) complex also mediates ubiquitination and degradation of actin-regulator EPS8 during G2 phase, leading to the transient degradation of EPS8 and subsequent cell shape changes required to allow mitotic progression. Substrate-specific adapter of the DCX(FBXW5) E3 ubiquitin-protein ligase complex which mediates the polyubiquitination and subsequent degradation of TSC2. May also act as a negative regulator of MAP3K7/TAK1 signaling in the interleukin-1B (IL1B) signaling pathway. The polypeptide is F-box/WD repeat-containing protein 5 (Fbxw5) (Rattus norvegicus (Rat)).